Here is a 491-residue protein sequence, read N- to C-terminus: Glutamate--tRNA ligase (491 aa).

Positions 13-23 (PSPTGFLHIGN) match the 'HIGH' region motif. Cysteine 110, cysteine 112, cysteine 137, and histidine 139 together coordinate Zn(2+). The short motif at 254 to 258 (KLSKR) is the 'KMSKS' region element. Lysine 257 contacts ATP.

It belongs to the class-I aminoacyl-tRNA synthetase family. Glutamate--tRNA ligase type 1 subfamily. As to quaternary structure, monomer. Zn(2+) is required as a cofactor.

The protein resides in the cytoplasm. It carries out the reaction tRNA(Glu) + L-glutamate + ATP = L-glutamyl-tRNA(Glu) + AMP + diphosphate. Catalyzes the attachment of glutamate to tRNA(Glu) in a two-step reaction: glutamate is first activated by ATP to form Glu-AMP and then transferred to the acceptor end of tRNA(Glu). The polypeptide is Glutamate--tRNA ligase (Listeria monocytogenes serotype 4b (strain F2365)).